We begin with the raw amino-acid sequence, 135 residues long: uncharacterized protein (135 aa).

A run of 4 helical transmembrane segments spans residues 7-25 (WSAAVLAAAVSFLYGEWTI), 29-51 (ILLTLVVIDYGTGLVAAGVTGNI), 64-85 (VFIFVMVAIAHMIDTVLLEVGI), and 89-108 (ALIFMAAVVFYIVNELISIF).

Belongs to the bacteriophage holin family. Cp-1 holin subfamily.

It is found in the cell membrane. This is an uncharacterized protein from Halalkalibacterium halodurans (strain ATCC BAA-125 / DSM 18197 / FERM 7344 / JCM 9153 / C-125) (Bacillus halodurans).